We begin with the raw amino-acid sequence, 57 residues long: UPF0391 membrane protein Smed_4051 (57 aa).

Helical transmembrane passes span 4–24 and 33–53; these read WALI…SGIS and ILFY…LAVG.

This sequence belongs to the UPF0391 family.

It is found in the cell membrane. The protein is UPF0391 membrane protein Smed_4051 of Sinorhizobium medicae (strain WSM419) (Ensifer medicae).